The sequence spans 204 residues: Putative rubrerythrin (204 aa).

A Ferritin-like diiron domain is found at 1–159; that stretch reads MINNFFVINM…KLLKEVEEGT (159 aa). Residues E24, E57, E107, E110, E141, H144, C171, C174, C187, and C190 each contribute to the Fe(3+) site. In terms of domain architecture, Rubredoxin-like spans 166–204; the sequence is PVEWVCRKCGFVHLGKEPPEKCPSCSHPRKYFEVKCEKY.

As to quaternary structure, homodimer. Possesses two rubredoxin-like centers and two non-sulfur oxo-bridged di-iron centers per dimer. The cofactor is Fe(3+).

Its subcellular location is the cytoplasm. Its function is as follows. May provide oxidative stress protection via catalytic reduction of intracellular hydrogen peroxide. The protein is Putative rubrerythrin of Methanocaldococcus jannaschii (strain ATCC 43067 / DSM 2661 / JAL-1 / JCM 10045 / NBRC 100440) (Methanococcus jannaschii).